Reading from the N-terminus, the 281-residue chain is Pantothenate synthetase (281 aa).

26–33 (MGNLHDGH) provides a ligand contact to ATP. His33 serves as the catalytic Proton donor. Gln57 provides a ligand contact to (R)-pantoate. Gln57 contacts beta-alanine. 145-148 (GEKD) provides a ligand contact to ATP. Gln151 is a binding site for (R)-pantoate. An ATP-binding site is contributed by 182–185 (MSSR).

The protein belongs to the pantothenate synthetase family. In terms of assembly, homodimer.

The protein resides in the cytoplasm. It carries out the reaction (R)-pantoate + beta-alanine + ATP = (R)-pantothenate + AMP + diphosphate + H(+). It participates in cofactor biosynthesis; (R)-pantothenate biosynthesis; (R)-pantothenate from (R)-pantoate and beta-alanine: step 1/1. Functionally, catalyzes the condensation of pantoate with beta-alanine in an ATP-dependent reaction via a pantoyl-adenylate intermediate. This chain is Pantothenate synthetase, found in Idiomarina loihiensis (strain ATCC BAA-735 / DSM 15497 / L2-TR).